Here is a 72-residue protein sequence, read N- to C-terminus: uncharacterized protein (72 aa).

A disordered region spans residues 52–72 (KGGRQRDEAVGVEELCKQHKE). The segment covering 55–72 (RQRDEAVGVEELCKQHKE) has biased composition (basic and acidic residues).

Belongs to the YiiE family.

This is an uncharacterized protein from Escherichia coli O6:H1 (strain CFT073 / ATCC 700928 / UPEC).